A 285-amino-acid polypeptide reads, in one-letter code: Secreted LysM effector slp2 (285 aa).

The first 16 residues, 1–16, serve as a signal peptide directing secretion; it reads MLPITVVTLFAALAAA. A disordered region spans residues 75–143; the sequence is GDAAKAGDAA…KGGDAAKGGN (69 aa). Residues 85–116 are compositionally biased toward basic and acidic residues; the sequence is KGGDAKGGDAKGGDAKGGDAKGGKGGDAKGGK. Residues 117-139 show a composition bias toward gly residues; it reads GGDAAKGGKGGDAAKGGKGGDAA. LysM domains lie at 157–201 and 237–281; these read VEHK…VLKI and FTRV…TINL.

The protein belongs to the secreted LysM effector family.

Its function is as follows. Might have a role in sequestration of chitin oligosaccharides (breakdown products of fungal cell walls that are released during invasion and act as triggers of host immunity) to dampen host defense. The sequence is that of Secreted LysM effector slp2 from Pyricularia oryzae (strain 70-15 / ATCC MYA-4617 / FGSC 8958) (Rice blast fungus).